The chain runs to 149 residues: Large ribosomal subunit protein uL15 (149 aa).

Residues 1–28 are compositionally biased toward basic and acidic residues; sequence MVIKIHDLRPAPGSKRDKIRVGRGEGSK. A disordered region spans residues 1 to 54; it reads MVIKIHDLRPAPGSKRDKIRVGRGEGSKGKTAGRGTKGTKARKNVSPRFEGGQM.

It belongs to the universal ribosomal protein uL15 family. As to quaternary structure, part of the 50S ribosomal subunit.

In terms of biological role, binds to the 23S rRNA. The polypeptide is Large ribosomal subunit protein uL15 (Saccharopolyspora erythraea (strain ATCC 11635 / DSM 40517 / JCM 4748 / NBRC 13426 / NCIMB 8594 / NRRL 2338)).